A 121-amino-acid polypeptide reads, in one-letter code: ATP synthase epsilon chain (121 aa).

This sequence belongs to the ATPase epsilon chain family. F-type ATPases have 2 components, CF(1) - the catalytic core - and CF(0) - the membrane proton channel. CF(1) has five subunits: alpha(3), beta(3), gamma(1), delta(1), epsilon(1). CF(0) has three main subunits: a, b and c.

It is found in the cell membrane. Produces ATP from ADP in the presence of a proton gradient across the membrane. The sequence is that of ATP synthase epsilon chain from Mycobacterium marinum (strain ATCC BAA-535 / M).